Consider the following 143-residue polypeptide: Endoribonuclease YbeY (143 aa).

The Zn(2+) site is built by H106, H110, and H116.

Belongs to the endoribonuclease YbeY family. It depends on Zn(2+) as a cofactor.

It localises to the cytoplasm. Its function is as follows. Single strand-specific metallo-endoribonuclease involved in late-stage 70S ribosome quality control and in maturation of the 3' terminus of the 16S rRNA. The polypeptide is Endoribonuclease YbeY (Petrotoga mobilis (strain DSM 10674 / SJ95)).